Here is a 94-residue protein sequence, read N- to C-terminus: Co-chaperonin GroES (94 aa).

It belongs to the GroES chaperonin family. Heptamer of 7 subunits arranged in a ring. Interacts with the chaperonin GroEL.

It is found in the cytoplasm. Its function is as follows. Together with the chaperonin GroEL, plays an essential role in assisting protein folding. The GroEL-GroES system forms a nano-cage that allows encapsulation of the non-native substrate proteins and provides a physical environment optimized to promote and accelerate protein folding. GroES binds to the apical surface of the GroEL ring, thereby capping the opening of the GroEL channel. The polypeptide is Co-chaperonin GroES (Lactococcus lactis subsp. lactis (strain IL1403) (Streptococcus lactis)).